The following is a 267-amino-acid chain: Fibroin light chain (267 aa).

Positions 1 to 16 (MLPFVLVLLVATSALA) are cleaved as a signal peptide. Position 19 is an N-acetylserine; in short form (Ser-19). Cys-103 and Cys-162 form a disulfide bridge.

Silk fibroin elementary unit consists in a disulfide-linked heavy and light chain and a p25 glycoprotein in molar ratios of 6:6:1. This results in a complex of approximately 2.3 MDa. Post-translationally, partially N-terminally processed to yield a short form which lacks the first two residues of the long form. The interchain disulfide bridge is essential for the intracellular transport and secretion of fibroin. Produced exclusively in the posterior (PSG) section of silk glands, which are essentially modified salivary glands.

It is found in the secreted. Functionally, it is likely that the major role of L-chain is to prevent the retention of H-chain in ER by forming the disulfide linkage. The protein is Fibroin light chain (FIBL) of Galleria mellonella (Greater wax moth).